Here is a 151-residue protein sequence, read N- to C-terminus: Large ribosomal subunit protein uL13 (151 aa).

This sequence belongs to the universal ribosomal protein uL13 family. Part of the 50S ribosomal subunit.

Functionally, this protein is one of the early assembly proteins of the 50S ribosomal subunit, although it is not seen to bind rRNA by itself. It is important during the early stages of 50S assembly. In Microcystis aeruginosa (strain NIES-843 / IAM M-2473), this protein is Large ribosomal subunit protein uL13.